Consider the following 61-residue polypeptide: MATKTLKVTQTKSSIGRLPKHRASLLGLGLRRINHTVEVEDTPSVRGMINKVYYMVSVEEV.

It belongs to the universal ribosomal protein uL30 family. As to quaternary structure, part of the 50S ribosomal subunit.

This chain is Large ribosomal subunit protein uL30, found in Shewanella halifaxensis (strain HAW-EB4).